The following is an 822-amino-acid chain: Nose resistant to fluoxetine protein 6 (822 aa).

The first 24 residues, 1–24 (MGNMRRLLIFAVLVILTVISNSKS), serve as a signal peptide directing secretion. An N-linked (GlcNAc...) asparagine glycan is attached at N236. 3 helical membrane passes run 306–326 (LAMF…FGTL), 617–637 (PYIR…LNAW), and 655–675 (IICW…LYWF).

The protein belongs to the acyltransferase 3 family. As to expression, in L1 larvae through to adult, hyp3 and hyp5, the most anterior cells in the hypodermis, and in intestine. Other hypodermal cells show weaker expression.

The protein resides in the membrane. Functionally, plays a role in the uptake of a range of molecules including lipids and xenobiotic compounds from the intestine to surrounding tissues. Mediates transport of lipids from intestine to the reproductive tract. Required for efficient yolk transport into oocytes. Vital for embryonic development. The protein is Nose resistant to fluoxetine protein 6 (nrf-6) of Caenorhabditis elegans.